A 641-amino-acid chain; its full sequence is DEAD-box ATP-dependent RNA helicase 50 (641 aa).

Disordered regions lie at residues serine 86–phenylalanine 115, arginine 129–valine 189, and aspartate 197–isoleucine 216. Residues proline 150–threonine 159 are compositionally biased toward acidic residues. The Q motif motif lies at arginine 240 to alanine 268. The Helicase ATP-binding domain occupies tyrosine 271 to isoleucine 452. Aspartate 284–threonine 291 provides a ligand contact to ATP. The DEAD box motif lies at aspartate 399–aspartate 402. One can recognise a Helicase C-terminal domain in the interval asparagine 487–valine 641.

It belongs to the DEAD box helicase family.

It catalyses the reaction ATP + H2O = ADP + phosphate + H(+). Functionally, probably involved in resistance to biotic and abiotic stresses. Confers tolerance to oxidative stress and mediates pathogenesis-related (PR) genes expression. Exhibits RNA-dependent ATPase and ATP-dependent RNA helicase activities in vitro. The polypeptide is DEAD-box ATP-dependent RNA helicase 50 (Oryza sativa subsp. japonica (Rice)).